Reading from the N-terminus, the 445-residue chain is Phosphoglucosamine mutase (445 aa).

The Phosphoserine intermediate role is filled by serine 102. 4 residues coordinate Mg(2+): serine 102, aspartate 241, aspartate 243, and aspartate 245. At serine 102 the chain carries Phosphoserine.

It belongs to the phosphohexose mutase family. It depends on Mg(2+) as a cofactor. Post-translationally, activated by phosphorylation.

It catalyses the reaction alpha-D-glucosamine 1-phosphate = D-glucosamine 6-phosphate. Catalyzes the conversion of glucosamine-6-phosphate to glucosamine-1-phosphate. The chain is Phosphoglucosamine mutase from Variovorax paradoxus (strain S110).